Consider the following 355-residue polypeptide: S-adenosylmethionine:tRNA ribosyltransferase-isomerase (355 aa).

It belongs to the QueA family. Monomer.

It localises to the cytoplasm. It carries out the reaction 7-aminomethyl-7-carbaguanosine(34) in tRNA + S-adenosyl-L-methionine = epoxyqueuosine(34) in tRNA + adenine + L-methionine + 2 H(+). The protein operates within tRNA modification; tRNA-queuosine biosynthesis. Its function is as follows. Transfers and isomerizes the ribose moiety from AdoMet to the 7-aminomethyl group of 7-deazaguanine (preQ1-tRNA) to give epoxyqueuosine (oQ-tRNA). The polypeptide is S-adenosylmethionine:tRNA ribosyltransferase-isomerase (Pectobacterium atrosepticum (strain SCRI 1043 / ATCC BAA-672) (Erwinia carotovora subsp. atroseptica)).